Reading from the N-terminus, the 455-residue chain is 5'-nucleotidase domain-containing protein 1 (455 aa).

Residue Asp-16 is the Nucleophile of the active site. Residues Asp-16 and Asp-18 each coordinate Mg(2+). Asp-18 acts as the Proton donor in catalysis. The residue at position 171 (Lys-171) is an N6-acetyllysine. Position 313 (Asp-313) interacts with Mg(2+). The span at 339–364 (GDEGTRSQRPEESEPLEKKGKYEGPK) shows a compositional bias: basic and acidic residues. The disordered stretch occupies residues 339 to 368 (GDEGTRSQRPEESEPLEKKGKYEGPKAKPL).

This sequence belongs to the 5'(3')-deoxyribonucleotidase family.

This Homo sapiens (Human) protein is 5'-nucleotidase domain-containing protein 1 (NT5DC1).